Here is a 133-residue protein sequence, read N- to C-terminus: uncharacterized protein (133 aa).

The next 2 membrane-spanning stretches (helical) occupy residues 13 to 33 (FLLS…LFLS) and 73 to 93 (FGNP…LLLL).

The protein resides in the membrane. This is an uncharacterized protein from Saccharomyces cerevisiae (strain ATCC 204508 / S288c) (Baker's yeast).